The following is a 698-amino-acid chain: MQAHELFRYFRMPELVDFRQYVRTLPTNTLMGFGAFAALTTFWYATRPKPLKPPCDLSMQSVEVAGSGGARRSALLDSDEPLVYFYDDVTTLYEGFQRGIQVSNNGPCLGSRKPDQPYEWLSYKQVAELSECIGSALIQKGFKTAPDQFIGIFAQNRPEWVIIEQGCFAYSMVIVPLYDTLGNEAITYIVNKAELSLVFVDKPEKAKLLLEGVENKLIPGLKIIVVMDAYGSELVERGQRCGVEVTSMKAMEDLGRANRRKPKPPAPEDLAVICFTSGTTGNPKGAMVTHRNIVSDCSAFVKATENTVNPCPDDTLISFLPLAHMFERVVECVMLCHGAKIGFFQGDIRLLMDDLKVLQPTVFPVVPRLLNRMFDRIFGQANTTLKRWLLDFASKRKEAELRSGIIRNNSLWDRLIFHKVQSSLGGRVRLMVTGAAPVSATVLTFLRAALGCQFYEGYGQTECTAGCCLTMPGDWTAGHVGAPMPCNLIKLVDVEEMNYMAAEGEGEVCVKGPNVFQGYLKDPAKTAEALDKDGWLHTGDIGKWLPNGTLKIIDRKKHIFKLAQGEYIAPEKIENIYMRSEPVAQVFVHGESLQAFLIAIVVPDVETLCSWAQKRGFEGSFEELCRNKDVKKAILEDMVRLGKDSGLKPFEQVKGITLHPELFSIDNGLLTPTMKAKRPELRNYFRSQIDDLYSTIKV.

The residue at position 1 (methionine 1) is an N-acetylmethionine. Tyrosine 9 carries the 3'-nitrotyrosine modification. Residues 25–45 (LPTNTLMGFGAFAALTTFWYA) traverse the membrane as a helical; Signal-anchor for type III membrane protein segment. Residues 46–698 (TRPKPLKPPC…IDDLYSTIKV (653 aa)) are Cytoplasmic-facing. Tyrosine 84 carries the post-translational modification Phosphotyrosine. A glycan (O-linked (GlcNAc) serine) is linked at serine 135. 3 positions are modified to N6-acetyllysine: lysine 207, lysine 356, and lysine 386. Serine 620 carries the post-translational modification Phosphoserine. Residue lysine 632 is modified to N6-acetyllysine.

Belongs to the ATP-dependent AMP-binding enzyme family. Requires Mg(2+) as cofactor. Highly expressed in liver, heart, skeletal muscle, kidney and erythroid cells, and to a lesser extent in brain, lung, placenta and pancreas.

The protein resides in the mitochondrion outer membrane. It is found in the peroxisome membrane. The protein localises to the microsome membrane. Its subcellular location is the endoplasmic reticulum membrane. The catalysed reaction is a long-chain fatty acid + ATP + CoA = a long-chain fatty acyl-CoA + AMP + diphosphate. It carries out the reaction (5Z,8Z,11Z,14Z)-eicosatetraenoate + ATP + CoA = (5Z,8Z,11Z,14Z)-eicosatetraenoyl-CoA + AMP + diphosphate. The enzyme catalyses 3,7,11,15-tetramethylhexadecanoate + ATP + CoA = phytanoyl-CoA + AMP + diphosphate. It catalyses the reaction hexadecanoate + ATP + CoA = hexadecanoyl-CoA + AMP + diphosphate. The catalysed reaction is (E)-hexadec-2-enoate + ATP + CoA = (2E)-hexadecenoyl-CoA + AMP + diphosphate. It carries out the reaction 2,6,10,14-tetramethylpentadecanoate + ATP + CoA = pristanoyl-CoA + AMP + diphosphate. The enzyme catalyses 14,15-epoxy-(5Z,8Z,11Z)-eicosatrienoate + ATP + CoA = 14,15-epoxy-(5Z,8Z,11Z)-eicosatrienoyl-CoA + AMP + diphosphate. It catalyses the reaction 5-hydroxy-(6E,8Z,11Z,14Z)-eicosatetraenoate + ATP + CoA = 5-hydroxy-(6E,8Z,11Z,14Z)-eicosatetraenoyl-CoA + AMP + diphosphate. The catalysed reaction is 12-hydroxy-(5Z,8Z,10E,14Z)-eicosatetraenoate + ATP + CoA = 12-hydroxy-(5Z,8Z,10E,14Z)-eicosatetraenoyl-CoA + AMP + diphosphate. It carries out the reaction 15-hydroxy-(5Z,8Z,11Z,13E)-eicosatetraenoate + ATP + CoA = 15-hydroxy-(5Z,8Z,11Z,13E)-eicosatetraenoyl-CoA + AMP + diphosphate. The enzyme catalyses (9Z)-octadecenoate + ATP + CoA = (9Z)-octadecenoyl-CoA + AMP + diphosphate. Its activity is regulated as follows. Inhibited at high temperature and by arachidonate. Catalyzes the conversion of long-chain fatty acids to their active form acyl-CoAs for both synthesis of cellular lipids, and degradation via beta-oxidation. Preferentially uses palmitoleate, oleate and linoleate. Preferentially activates arachidonate than epoxyeicosatrienoic acids (EETs) or hydroxyeicosatrienoic acids (HETEs). The sequence is that of Long-chain-fatty-acid--CoA ligase 1 from Homo sapiens (Human).